The following is a 422-amino-acid chain: Glutamyl-tRNA reductase (422 aa).

Substrate is bound by residues 49–52 (TCNR), Ser-108, 113–115 (EPQ), and Gln-119. Cys-50 serves as the catalytic Nucleophile. 188-193 (GAGQTI) lines the NADP(+) pocket.

This sequence belongs to the glutamyl-tRNA reductase family. In terms of assembly, homodimer.

The enzyme catalyses (S)-4-amino-5-oxopentanoate + tRNA(Glu) + NADP(+) = L-glutamyl-tRNA(Glu) + NADPH + H(+). It participates in porphyrin-containing compound metabolism; protoporphyrin-IX biosynthesis; 5-aminolevulinate from L-glutamyl-tRNA(Glu): step 1/2. Functionally, catalyzes the NADPH-dependent reduction of glutamyl-tRNA(Glu) to glutamate 1-semialdehyde (GSA). In Marinomonas sp. (strain MWYL1), this protein is Glutamyl-tRNA reductase.